The chain runs to 122 residues: Small ribosomal subunit protein uS13 (122 aa).

The tract at residues glycine 95 to lysine 122 is disordered.

Belongs to the universal ribosomal protein uS13 family. As to quaternary structure, part of the 30S ribosomal subunit. Forms a loose heterodimer with protein S19. Forms two bridges to the 50S subunit in the 70S ribosome.

Functionally, located at the top of the head of the 30S subunit, it contacts several helices of the 16S rRNA. In the 70S ribosome it contacts the 23S rRNA (bridge B1a) and protein L5 of the 50S subunit (bridge B1b), connecting the 2 subunits; these bridges are implicated in subunit movement. Contacts the tRNAs in the A and P-sites. The sequence is that of Small ribosomal subunit protein uS13 from Sphingopyxis alaskensis (strain DSM 13593 / LMG 18877 / RB2256) (Sphingomonas alaskensis).